Consider the following 221-residue polypeptide: Placenta growth factor (221 aa).

The signal sequence occupies residues M1–A18. The N-linked (GlcNAc...) asparagine glycan is linked to N33. 3 cysteine pairs are disulfide-bonded: C52–C94, C83–C128, and C87–C130. Residue N101 is glycosylated (N-linked (GlcNAc...) asparagine). The segment at Q175 to R221 is disordered. A compositionally biased stretch (basic residues) spans H192–K203. Residues P193 to R213 form a heparin-binding region. Over residues P204–R221 the composition is skewed to basic and acidic residues.

The protein belongs to the PDGF/VEGF growth factor family. Antiparallel homodimer; disulfide-linked. Also found as heterodimer with VEGFA/VEGF. Isoform PlGF-3 is found both as homodimer and as monomer. Post-translationally, N-glycosylated. In terms of tissue distribution, while the three isoforms are present in most placental tissues, PlGF-2 is specific to early (8 week) placenta and only PlGF-1 is found in the colon and mammary carcinomas.

The protein resides in the secreted. In terms of biological role, growth factor active in angiogenesis and endothelial cell growth, stimulating their proliferation and migration. It binds to the receptor FLT1/VEGFR-1. Isoform PlGF-2 binds NRP1/neuropilin-1 and NRP2/neuropilin-2 in a heparin-dependent manner. Also promotes cell tumor growth. In Homo sapiens (Human), this protein is Placenta growth factor (PGF).